We begin with the raw amino-acid sequence, 3063 residues long: Collagen alpha-1(XII) chain (3063 aa).

The signal sequence occupies residues 1–23; the sequence is MRSRLPPALAALGAALLLSSIEA. In terms of domain architecture, Fibronectin type-III 1 spans 27–117; that stretch reads PPSDLNFKII…GQLTIQTGSS (91 aa). The VWFA 1 domain maps to 140–316; it reads DLVFLVDGSW…DIQNEIISQV (177 aa). Ser329 carries an O-linked (Xyl...) (chondroitin sulfate) serine glycan. Positions 336-426 constitute a Fibronectin type-III 2 domain; the sequence is PPSNLIAMEV…SIMEKTQPMK (91 aa). The VWFA 2 domain occupies 440–616; it reads DIVFLVDGSY…RISFELTQSI (177 aa). Fibronectin type-III domains follow at residues 634-722, 725-816, 817-905, 907-998, 999-1087, and 1089-1179; these read PPKD…TEEV, APRN…VRGN, PRDL…LEER, SPQD…LSQD, SKTL…ASRF, and SPRN…TLSD. Asn700 is a glycosylation site (N-linked (GlcNAc...) asparagine). Residue Ser798 is glycosylated (O-linked (Xyl...) (chondroitin sulfate) serine). The disordered stretch occupies residues 799–830; sequence GPGTPLTGNAATEEVRGNPRDLRVSDPTTSTM. The segment covering 811–822 has biased composition (basic and acidic residues); it reads EEVRGNPRDLRV. The Cell attachment site signature appears at 862-864; that stretch reads RGD. 2 O-linked (Xyl...) (chondroitin sulfate) serine glycosylation sites follow: Ser889 and Ser981. Residues 1077 to 1099 are disordered; it reads RQGSGTTASRFKSPRNLKTSDPT. A compositionally biased stretch (polar residues) spans 1079 to 1099; that stretch reads GSGTTASRFKSPRNLKTSDPT. In terms of domain architecture, VWFA 3 spans 1199–1371; the sequence is DIVLLVDGSW…ESLSRIVDDL (173 aa). Fibronectin type-III domains lie at 1387–1476, 1477–1567, 1568–1658, 1659–1754, 1755–1849, 1850–1935, 1936–2026, 2027–2117, 2118–2206, and 2207–2294; these read APSN…LPVP, VVSL…LPLP, RPQD…VPAP, TNLK…APKS, GPRN…TVRN, LRVY…LMRG, LARN…LPRS, GPRN…VGLL, PPQN…LYLN, and VTDL…TVKP. Asn1763 is a glycosylation site (N-linked (GlcNAc...) asparagine). Asn2206 is a glycosylation site (N-linked (GlcNAc...) asparagine). The interval 2283-2312 is disordered; that stretch reads GVSVKEHTTVKPTEAPTEPPTPPPPPTIPP. The span at 2299–2311 shows a compositional bias: pro residues; sequence TEPPTPPPPPTIP. A VWFA 4 domain is found at 2323–2496; the sequence is DIVFLTDASW…ESFEKIEDNL (174 aa). The tract at residues 2451 to 2746 is nonhelical region (NC3); that stretch reads SGFSVFVVGV…NSCTCTQDSV (296 aa). Residues 2520-2712 form the Laminin G-like domain; that stretch reads GFKMLEAYNL…IQSFDIVCSP (193 aa). N-linked (GlcNAc...) asparagine glycosylation is found at Asn2528 and Asn2679. Disordered regions lie at residues 2743-2896 and 2932-3063; these read QDSV…GDRG and NDYQ…PGSG. 4 Collagen-like domains span residues 2747-2798, 2802-2852, 2853-2898, and 2941-2990; these read GPPG…GPNG, PGEQ…AMGP, RGPP…RGDI, and PGPP…GERG. The triple-helical region (COL2) with 1 imperfection stretch occupies residues 2747 to 2898; it reads GPPGPPGPAG…KGEKGDRGDI (152 aa). The short motif at 2779–2781 is the Cell attachment site element; that stretch reads RGD. The segment covering 2784–2794 has biased composition (pro residues); sequence PPGPQGPPGPQ. A compositionally biased stretch (low complexity) spans 2817–2826; the sequence is PGLPGRTGTP. Pro residues-rich tracts occupy residues 2828–2837 and 2853–2862; these read LPGPPGPMGP and RGPPGPPGSP. Low complexity predominate over residues 2864 to 2874; sequence SPGVTGPSGKP. Positions 2895–2897 match the Cell attachment site motif; it reads RGD. The segment at 2899-2941 is nonhelical region (NC2); sequence ASQNMMRAVARQVCEQLISGQMNRFNQMLNQIPNDYQSSRNQP. The span at 2941 to 2950 shows a compositional bias: pro residues; it reads PGPPGPPGPP. A triple-helical region (COL1) with 2 imperfections region spans residues 2942 to 3044; sequence GPPGPPGPPG…RGPPGPPGYC (103 aa). A 4-hydroxyproline mark is found at Pro2944, Pro2947, Pro2950, Pro2959, Pro2965, Pro2968, Pro2971, Pro2983, Pro3000, Pro3003, Pro3014, Pro3023, Pro3026, and Pro3029. Residues 2957-2966 show a composition bias toward gly residues; the sequence is GEPGPGGRPG. The span at 3006–3020 shows a compositional bias: low complexity; that stretch reads QGESRTGPPGSTGSR. The nonhelical region (NC1) stretch occupies residues 3045–3063; the sequence is DSSQCASIPYNGQGYPGSG.

It belongs to the fibril-associated collagens with interrupted helices (FACIT) family. Trimer of identical chains each containing 190 kDa of non-triple-helical sequences. Post-translationally, the triple-helical tail is stabilized by disulfide bonds at each end. Hydroxylation on proline residues within the sequence motif, GXPG, is most likely to be 4-hydroxy as this fits the requirement for 4-hydroxylation in vertebrates. In terms of processing, isoform 1 O-glycosylation; glycosaminoglycan of chondroitin-sulfate type. In terms of tissue distribution, found in collagen I-containing tissues: both isoform 1 and isoform 2 appear in amnion, chorion, skeletal muscle, small intestine, and in cell culture of dermal fibroblasts, keratinocytes and endothelial cells. Only isoform 2 is found in lung, placenta, kidney and a squamous cell carcinoma cell line. Isoform 1 is also present in the corneal epithelial Bowman's membrane (BM) and the interfibrillar matrix of the corneal stroma, but it is not detected in the limbal BM.

Its subcellular location is the secreted. The protein resides in the extracellular space. It is found in the extracellular matrix. Its function is as follows. Type XII collagen interacts with type I collagen-containing fibrils, the COL1 domain could be associated with the surface of the fibrils, and the COL2 and NC3 domains may be localized in the perifibrillar matrix. In Homo sapiens (Human), this protein is Collagen alpha-1(XII) chain (COL12A1).